The following is a 120-amino-acid chain: Vanadium-binding protein 2 (120 aa).

The signal sequence occupies residues 1-20 (MSKVIFALVLVVVLVACINA). A propeptide spanning residues 21-29 (TYVEFEEAY) is cleaved from the precursor. Disulfide bonds link cysteine 34–cysteine 88, cysteine 38–cysteine 84, cysteine 42–cysteine 81, cysteine 48–cysteine 74, cysteine 52–cysteine 69, cysteine 56–cysteine 65, cysteine 92–cysteine 119, cysteine 97–cysteine 114, and cysteine 101–cysteine 111.

Interacts with VIP1. In terms of tissue distribution, expressed in vanadocytes.

Its subcellular location is the cytoplasm. Acts as a vanadium reductase which may form an electron transfer cascade in conjunction with NADPH and glutathione through thiol disulfide exchange reactions. Partial cleavage of its disulfide bonds results in the reduction of V(5+) to V(4+). Binds up to 24 V(4+) ions per protein at pH 7.5. Also binds Fe(3+) and Cu(2+) and, to a lesser extent, Co(2+), Zn(2+) and Ni(2+). This is Vanadium-binding protein 2 from Ascidia sydneiensis samea (Vanadium-rich ascidian).